Reading from the N-terminus, the 474-residue chain is Ribosomal RNA small subunit methyltransferase F (474 aa).

Residues 119-125 (AAAPGSK), E143, D170, and D188 contribute to the S-adenosyl-L-methionine site. C241 serves as the catalytic Nucleophile.

It belongs to the class I-like SAM-binding methyltransferase superfamily. RsmB/NOP family.

The protein localises to the cytoplasm. It carries out the reaction cytidine(1407) in 16S rRNA + S-adenosyl-L-methionine = 5-methylcytidine(1407) in 16S rRNA + S-adenosyl-L-homocysteine + H(+). Functionally, specifically methylates the cytosine at position 1407 (m5C1407) of 16S rRNA. This is Ribosomal RNA small subunit methyltransferase F from Shewanella oneidensis (strain ATCC 700550 / JCM 31522 / CIP 106686 / LMG 19005 / NCIMB 14063 / MR-1).